The sequence spans 429 residues: Ribosomal RNA small subunit methyltransferase B (429 aa).

S-adenosyl-L-methionine-binding positions include 254-260 (CAAPGGK), aspartate 277, aspartate 303, and aspartate 322. Cysteine 375 acts as the Nucleophile in catalysis.

The protein belongs to the class I-like SAM-binding methyltransferase superfamily. RsmB/NOP family.

The protein resides in the cytoplasm. It catalyses the reaction cytidine(967) in 16S rRNA + S-adenosyl-L-methionine = 5-methylcytidine(967) in 16S rRNA + S-adenosyl-L-homocysteine + H(+). Functionally, specifically methylates the cytosine at position 967 (m5C967) of 16S rRNA. This Yersinia enterocolitica serotype O:8 / biotype 1B (strain NCTC 13174 / 8081) protein is Ribosomal RNA small subunit methyltransferase B.